We begin with the raw amino-acid sequence, 262 residues long: Acyl-coenzyme A diphosphatase FITM2 (262 aa).

The Cytoplasmic portion of the chain corresponds to 1-23; that stretch reads MEHLERCAWVLRGTLVRAAVRRY. The helical transmembrane segment at 24 to 44 threads the bilayer; the sequence is LPWALAASMLAGSLLKELSPL. The Lumenal segment spans residues 45-57; it reads PESYLSNKRNVLN. A helical transmembrane segment spans residues 58–78; it reads VYFVKVAWAWTFCLLLPFIAL. The Cytoplasmic segment spans residues 79 to 93; sequence TNYHLTGKAGLVLRR. A helical membrane pass occupies residues 94 to 114; it reads LSTLLVGTAIWYVCTAIFSNV. The Lumenal portion of the chain corresponds to 115-145; sequence EHYTGSCYQSPALEGVRNEPLSKQQCHGQGG. A helical membrane pass occupies residues 146 to 166; the sequence is FWHGFDISGHSFLLTFCALMI. The active site involves His155. Residues 167–185 are Cytoplasmic-facing; sequence VEEMAVLHEVKTDRSHCLH. Residues 186 to 206 form a helical membrane-spanning segment; sequence VAITALVVALGFLTFIWVWMF. The Lumenal portion of the chain corresponds to 207–218; sequence LCTAVYFHNLSQ. The active site involves His214. A helical membrane pass occupies residues 219–239; sequence KVFGTLFGLLGWYGTYGFWYL. Residues 240-262 are Cytoplasmic-facing; that stretch reads KSFSPGLPPQSCSSNLKQDSYKR.

It belongs to the FIT family. FIT2 subfamily.

It is found in the endoplasmic reticulum membrane. It carries out the reaction an acyl-CoA + H2O = an acyl-4'-phosphopantetheine + adenosine 3',5'-bisphosphate + 2 H(+). It catalyses the reaction (9Z)-octadecenoyl-CoA + H2O = S-(9Z-octadecenoyl)-4'-phosphopantetheine + adenosine 3',5'-bisphosphate + 2 H(+). The catalysed reaction is (5Z,8Z,11Z,14Z)-eicosatetraenoyl-CoA + H2O = S-(5Z,8Z,11Z,14Z-eicosatetraenoyl)-4'-phosphopantetheine + adenosine 3',5'-bisphosphate + 2 H(+). The enzyme catalyses hexadecanoyl-CoA + H2O = S-hexadecanoyl-4'-phosphopantetheine + adenosine 3',5'-bisphosphate + 2 H(+). Its function is as follows. Fatty acyl-coenzyme A (CoA) diphosphatase that hydrolyzes fatty acyl-CoA to yield acyl-4'-phosphopantetheine and adenosine 3',5'-bisphosphate. Preferentially hydrolyzes unsaturated long-chain acyl-CoA substrates such as oleoyl-CoA/(9Z)-octadecenoyl-CoA and arachidonoyl-CoA/(5Z,8Z,11Z,14Z)-eicosatetraenoyl-CoA in the endoplasmic reticulum (ER) lumen. This catalytic activity is required for maintaining ER structure and for lipid droplets (LDs) biogenesis, which are lipid storage organelles involved in maintaining lipid and energy homeostasis. Directly binds to diacylglycerol (DAGs) and triacylglycerol, which is also important for LD biogenesis. May support directional budding of nacent LDs from the ER into the cytosol by reducing DAG levels at sites of LD formation. Plays a role in the regulation of cell morphology and cytoskeletal organization. The polypeptide is Acyl-coenzyme A diphosphatase FITM2 (Sus scrofa (Pig)).